A 616-amino-acid chain; its full sequence is Ectonucleoside triphosphate diphosphohydrolase 4 (616 aa).

Residues 1–33 (MGRIGISCLFPASWHFSISPVGCPRILNTNLRQ) lie on the Cytoplasmic side of the membrane. The helical transmembrane segment at 34–54 (IMVISVLAAAVSLLYFSVVII) threads the bilayer. Topologically, residues 55–559 (RNKYGRLTRD…ASHTHWRGVS (505 aa)) are lumenal. Catalysis depends on E222, which acts as the Proton acceptor. A disulfide bond links C368 and C395. N-linked (GlcNAc...) asparagine glycosylation is found at N404 and N407. C461 and C490 are joined by a disulfide. A helical transmembrane segment spans residues 560–580 (FVYNHYLFSGCFLVVLLAILL). Topologically, residues 581–616 (YLLRLRRIHRRTPRSSSAAALWMEEGLPAQNAPGTL) are cytoplasmic.

The protein belongs to the GDA1/CD39 NTPase family. The cofactor is Ca(2+). Mg(2+) is required as a cofactor. As to expression, ubiquitous. Highest expression in testis and lowest in bladder.

It is found in the cytoplasmic vesicle. The protein localises to the autophagosome membrane. Its subcellular location is the lysosome membrane. It localises to the golgi apparatus membrane. The enzyme catalyses a ribonucleoside 5'-diphosphate + H2O = a ribonucleoside 5'-phosphate + phosphate + H(+). It catalyses the reaction a ribonucleoside 5'-triphosphate + H2O = a ribonucleoside 5'-diphosphate + phosphate + H(+). The catalysed reaction is UDP + H2O = UMP + phosphate + H(+). It carries out the reaction UTP + H2O = UDP + phosphate + H(+). The enzyme catalyses CTP + H2O = CDP + phosphate + H(+). It catalyses the reaction GDP + H2O = GMP + phosphate + H(+). The catalysed reaction is GTP + H2O = GDP + phosphate + H(+). It carries out the reaction 5-methyl-UTP + H2O = 5-methyl-UDP + phosphate + H(+). In terms of biological role, catalyzes the hydrolysis of nucleoside triphosphates and diphosphates in a calcium- or magnesium-dependent manner, with a preference for pyrimidines. Preferentially hydrolyzes UTP and TTP. AMP, ADP, ATP and UMP are not substrates. Preferentially activated by Ca(2+) over Mg(2+). Has a broad substrate specificity with the ability of cleaving all nucleotide di- and triphosphates with the exception of adenosine di- and triphosphate (ADP and ATP). Preferentially hydrolyzes CTP, UDP, CDP, GTP and GDP. Can use either Ca(2+) or Mg(2+) equally. This chain is Ectonucleoside triphosphate diphosphohydrolase 4, found in Homo sapiens (Human).